A 658-amino-acid chain; its full sequence is PTS system 2-O-alpha-mannosyl-D-glycerate-specific EIIABC component (658 aa).

Residues 1–313 (MVLFYRAHWR…TELKQALLSG (313 aa)) are Periplasmic-facing. The region spanning 25–171 (TLTHRDALCL…DELLSALDDK (147 aa)) is the PTS EIIA type-2 domain. Residue His-87 is the Tele-phosphohistidine intermediate; for EIIA activity of the active site. A Phosphohistidine; by HPr modification is found at His-87. Residues 186 to 282 (IVCVTACPAG…AEALIQQALT (97 aa)) enclose the PTS EIIB type-2 domain. Cys-192 serves as the catalytic Phosphocysteine intermediate; for EIIB activity. Cys-192 carries the phosphocysteine; by EIIA modification. The PTS EIIC type-2 domain occupies 306–641 (LKQALLSGIS…AISTAILLMW (336 aa)). A helical membrane pass occupies residues 314–334 (ISFAVPLIVAGGTVLAVAVLL). Over 335 to 358 (SQIFGLQDLFNEENSWLWMYRKLG) the chain is Cytoplasmic. Residues 359–379 (GGLLGILMVPVLAAYTAYSLA) traverse the membrane as a helical segment. Over 380–389 (DKPALAPGFA) the chain is Periplasmic. A helical transmembrane segment spans residues 390-410 (AGLAANMIGSGFLGAVVGGLI). The Cytoplasmic segment spans residues 411–433 (AGYLMRWVKNHLRLSSKFNGFLT). A helical transmembrane segment spans residues 434 to 454 (FYLYPVLGTLGAGSLMLFVVG). The Periplasmic portion of the chain corresponds to 455–474 (EPVAWINNSLTAWLNGLSGS). A helical transmembrane segment spans residues 475-495 (NALLLGAILGFMCSFDLGGPV). Residues 496 to 500 (NKAAY) are Cytoplasmic-facing. Residues 501-521 (AFCLGAMANGVYGPYAIFASV) form a helical membrane-spanning segment. Residues 522–551 (KMVSAFTVTASTMLAPRLFKEFEIETGKST) lie on the Periplasmic side of the membrane. Residues 552–572 (WLLGLAGITEGAIPMAIEDPL) traverse the membrane as a helical segment. Position 573 (Arg-573) is a topological domain, cytoplasmic. Residues 574-594 (VIGSFVLGSMVTGAIVGAMNI) form a helical membrane-spanning segment. At 595–620 (GLSTPGAGIFSLFLLHDNGAGGVMAA) the chain is on the periplasmic side. A helical transmembrane segment spans residues 621 to 641 (IGWFGAALVGAAISTAILLMW). The Cytoplasmic segment spans residues 642-658 (RRHAVKHGNYLTDGVMP).

The protein localises to the cell inner membrane. The catalysed reaction is (2R)-2-O-(alpha-D-mannosyl)-glycerate(out) + N(pros)-phospho-L-histidyl-[protein] = (2R)-2-O-(6-phospho-alpha-D-mannosyl)-glycerate(in) + L-histidyl-[protein]. Functionally, the phosphoenolpyruvate-dependent sugar phosphotransferase system (sugar PTS), a major carbohydrate active transport system, catalyzes the phosphorylation of incoming sugar substrates concomitantly with their translocation across the cell membrane. This system is involved in mannosyl-D-glycerate transport. Also involved in thermoinduction of ompC. The chain is PTS system 2-O-alpha-mannosyl-D-glycerate-specific EIIABC component from Escherichia coli (strain K12).